The following is a 457-amino-acid chain: Argininosuccinate lyase (457 aa).

It belongs to the lyase 1 family. Argininosuccinate lyase subfamily.

It localises to the cytoplasm. The catalysed reaction is 2-(N(omega)-L-arginino)succinate = fumarate + L-arginine. It participates in amino-acid biosynthesis; L-arginine biosynthesis; L-arginine from L-ornithine and carbamoyl phosphate: step 3/3. This chain is Argininosuccinate lyase, found in Escherichia fergusonii (strain ATCC 35469 / DSM 13698 / CCUG 18766 / IAM 14443 / JCM 21226 / LMG 7866 / NBRC 102419 / NCTC 12128 / CDC 0568-73).